A 319-amino-acid polypeptide reads, in one-letter code: Acetyl-coenzyme A carboxylase carboxyl transferase subunit alpha (319 aa).

One can recognise a CoA carboxyltransferase C-terminal domain in the interval 35-296 (NIDEEVHRLR…KAQLLADLAD (262 aa)).

This sequence belongs to the AccA family. As to quaternary structure, acetyl-CoA carboxylase is a heterohexamer composed of biotin carboxyl carrier protein (AccB), biotin carboxylase (AccC) and two subunits each of ACCase subunit alpha (AccA) and ACCase subunit beta (AccD).

Its subcellular location is the cytoplasm. It catalyses the reaction N(6)-carboxybiotinyl-L-lysyl-[protein] + acetyl-CoA = N(6)-biotinyl-L-lysyl-[protein] + malonyl-CoA. It participates in lipid metabolism; malonyl-CoA biosynthesis; malonyl-CoA from acetyl-CoA: step 1/1. Its function is as follows. Component of the acetyl coenzyme A carboxylase (ACC) complex. First, biotin carboxylase catalyzes the carboxylation of biotin on its carrier protein (BCCP) and then the CO(2) group is transferred by the carboxyltransferase to acetyl-CoA to form malonyl-CoA. The chain is Acetyl-coenzyme A carboxylase carboxyl transferase subunit alpha from Shigella sonnei (strain Ss046).